The chain runs to 235 residues: Sugar fermentation stimulation protein homolog (235 aa).

It belongs to the SfsA family.

This Nitrosococcus oceani (strain ATCC 19707 / BCRC 17464 / JCM 30415 / NCIMB 11848 / C-107) protein is Sugar fermentation stimulation protein homolog.